The following is a 120-amino-acid chain: Glycine cleavage system H protein (120 aa).

The Lipoyl-binding domain maps to 17–99; sequence VATVGITTYA…QGAGWFFKLK (83 aa). Lys-58 is subject to N6-lipoyllysine.

This sequence belongs to the GcvH family. In terms of assembly, the glycine cleavage system is composed of four proteins: P, T, L and H. Requires (R)-lipoate as cofactor.

In terms of biological role, the glycine cleavage system catalyzes the degradation of glycine. The H protein shuttles the methylamine group of glycine from the P protein to the T protein. The sequence is that of Glycine cleavage system H protein from Rhizobium etli (strain CIAT 652).